The chain runs to 411 residues: Tyrosine--tRNA ligase (411 aa).

Tyrosine 34 contributes to the L-tyrosine binding site. The 'HIGH' region motif lies at 39–48 (CTATSLHIGS). Positions 171 and 175 each coordinate L-tyrosine. The 'KMSKS' region signature appears at 231–235 (KMGKT). Residue lysine 234 participates in ATP binding. Residues 345–411 (ISAYELFHEA…GKKKHILVRV (67 aa)) form the S4 RNA-binding domain.

This sequence belongs to the class-I aminoacyl-tRNA synthetase family. TyrS type 1 subfamily. Homodimer.

It is found in the cytoplasm. The catalysed reaction is tRNA(Tyr) + L-tyrosine + ATP = L-tyrosyl-tRNA(Tyr) + AMP + diphosphate + H(+). Functionally, catalyzes the attachment of tyrosine to tRNA(Tyr) in a two-step reaction: tyrosine is first activated by ATP to form Tyr-AMP and then transferred to the acceptor end of tRNA(Tyr). The protein is Tyrosine--tRNA ligase of Rickettsia conorii (strain ATCC VR-613 / Malish 7).